The chain runs to 519 residues: Trichothecene 15-O-acetyltransferase TRI3 (519 aa).

15-deacetylcalonectrin is bound at residue His-414.

This sequence belongs to the trichothecene O-acetyltransferase family.

It participates in sesquiterpene biosynthesis; trichothecene biosynthesis. 15-O-acetyltransferase; part of the core gene cluster that mediates the biosynthesis of trichothecenes, a very large family of chemically related bicyclic sesquiterpene compounds acting as mycotoxins, including T2-toxin. The biosynthesis of trichothecenes begins with the cyclization of farnesyl diphosphate to trichodiene and is catalyzed by the trichodiene synthase TRI5. Trichodiene undergoes a series of oxygenations catalyzed by the cytochrome P450 monooxygenase TRI4. TRI4 controls the addition of four oxygens at C-2, C-3, C-11, and the C-12, C-13-epoxide to form the intermediate isotrichotriol. Isotrichotriol then undergoes a non-enzymatic isomerization and cyclization to form isotrichodermol. During this process, the oxygen at the C-2 position becomes the pyran ring oxygen and the hydroxyl group at C-11 is lost. More complex type A trichothecenes are built by modifying isotrichodermol through a series of paired hydroxylation and acetylation or acylation steps. Isotrichodermol is converted to isotrichodermin by the acetyltransferase TRI101. TRI101 encodes a C-3 transacetylase that acts as a self-protection or resistance factor during biosynthesis and that the presence of a free C-3 hydroxyl group is a key component of Fusarium trichothecene phytotoxicity. A second hydroxyl group is added to C-15 by the trichothecene C-15 hydroxylase TRI11, producing 15-decalonectrin, which is then acetylated by TRI3, producing calonectrin. A third hydroxyl group is added at C-4 by the cytochrome P450 monooxygenase TRI13, converting calonectrin to 3,15-diacetoxyspirpenol, which is subsequently acetylated by the acetyltransferase TRI7. A fourth hydroxyl group is added to C-8 by the cytochrome P450 monooxygenase TRI1, followed by the addition of an isovaleryl moiety by TRI16. Finally, the acetyl group is removed from the C-3 position by the trichothecene C-3 esterase TRI8 to produce T-2 toxin. The protein is Trichothecene 15-O-acetyltransferase TRI3 of Fusarium sporotrichioides.